Reading from the N-terminus, the 149-residue chain is Large ribosomal subunit protein eL19 (149 aa).

Residues V45–E94 are disordered. Residues R62–G73 are compositionally biased toward basic and acidic residues. Basic residues predominate over residues H74–A85.

It belongs to the eukaryotic ribosomal protein eL19 family. In terms of assembly, part of the 50S ribosomal subunit.

Functionally, binds to the 23S rRNA. The sequence is that of Large ribosomal subunit protein eL19 from Halobacterium salinarum (strain ATCC 700922 / JCM 11081 / NRC-1) (Halobacterium halobium).